A 595-amino-acid polypeptide reads, in one-letter code: Estrogen receptor (595 aa).

A modulating(transactivation AF-1); mediates interaction with MACROD1 region spans residues 1–184; the sequence is MTMTLHTKAS…AMESVKETRY (184 aa). Serine 10 carries O-linked (GlcNAc) serine glycosylation. The required for interaction with NCOA1 stretch occupies residues 35-47; it reads LERALSEVYVDSS. The interval 35 to 174 is interaction with DDX5; self-association; sequence LERALSEVYV…LSSSSEKGSM (140 aa). 2 positions are modified to phosphoserine; by CDK2: serine 103 and serine 105. Serine 118 carries the phosphoserine modification. The segment at 143–174 is disordered; sequence DSGPPAFYRSNSDNRRQSGRERLSSSSEKGSM. Basic and acidic residues predominate over residues 154 to 165; sequence SDNRRQSGRERL. Residue serine 167 is modified to Phosphoserine; by CK2. 2 consecutive NR C4-type zinc fingers follow at residues 185–205 and 221–245; these read CAVC…CEGC and CPAT…LRKC. Residues 185–250 constitute a DNA-binding region (nuclear receptor); that stretch reads CAVCNDYASG…RLRKCYEVGM (66 aa). The segment at 185 to 310 is mediates interaction with DNTTIP2; sequence CAVCNDYASG…TKKNSPALSL (126 aa). Residues 251–310 form a hinge region; that stretch reads MKGGIRKDRRGGRMLKHKRQRDDLEGRNDMGPSGDMRATNLWPSPLVIKHTKKNSPALSL. Arginine 260 is modified (asymmetric dimethylarginine; by PRMT1). The span at 260–269 shows a compositional bias: basic residues; it reads RGGRMLKHKR. The interval 260–285 is disordered; it reads RGGRMLKHKRQRDDLEGRNDMGPSGD. The interval 262 to 595 is interaction with AKAP13; the sequence is GRMLKHKRQR…SEAESFPNTI (334 aa). The tract at residues 264–595 is self-association; sequence MLKHKRQRDD…SEAESFPNTI (332 aa). The NR LBD domain occupies 311–547; it reads TADQMVSALL…DLLLEMLDAH (237 aa). Positions 311-595 are transactivation AF-2; it reads TADQMVSALL…SEAESFPNTI (285 aa). The 17beta-estradiol site is built by glutamate 353 and arginine 394. Cysteine 447 is lipidated: S-palmitoyl cysteine. Position 524 (histidine 524) interacts with 17beta-estradiol. Residue tyrosine 537 is modified to Phosphotyrosine; by Tyr-kinases. The segment at 554–578 is disordered; the sequence is SRMGVSPEEPSQSQLTTTNSTSSHS. The segment covering 564–578 has biased composition (low complexity); it reads SQSQLTTTNSTSSHS. Threonine 571 carries an O-linked (GlcNAc) threonine glycan.

Belongs to the nuclear hormone receptor family. NR3 subfamily. As to quaternary structure, binds DNA as a homodimer. Can form a heterodimer with ESR2. Interacts with coactivator NCOA5. Interacts with PELP1, the interaction is enhanced by 17-beta-estradiol; the interaction increases ESR1 transcriptional activity. Interacts with NCOA7; the interaction is ligand-inducible. Interacts with AKAP13, CUEDC2, HEXIM1, KDM5A, MAP1S, SMARD1, and UBE1C. Interacts with MUC1; the interaction is stimulated by 7 beta-estradiol (E2) and enhances ESR1-mediated transcription. Interacts with DNTTIP2, and UIMC1. Interacts with KMT2D/MLL2. Interacts with ATAD2; the interaction is enhanced by estradiol. Interacts with KIF18A and LDB1. Interacts with RLIM (via its C-terminus). Interacts with MACROD1. Interacts with SH2D4A and PLCG. Interacts with SH2D4A; the interaction blocks binding to PLCG and inhibits estrogen-induced cell proliferation. Interacts with DYNLL1. Interacts with CCDC62; the interaction requires estradiol and appears to enhance the transcription of target genes. Interacts with NR2C1; the interaction prevents homodimerization of ESR1 and suppresses its transcriptional activity and cell growth. Interacts with DNAAF4. Interacts with PRMT2. Interacts with RBFOX2. Interacts with EP300; the interaction is estrogen-dependent and enhanced by CITED1. Interacts with CITED1; the interaction is estrogen-dependent. Interacts with FAM120B, FOXL2, PHB2 and SLC30A9. Interacts with coactivators NCOA3 and NCOA6. Interacts with STK3/MST2 only in the presence of SAV1 and vice-versa. Binds to CSNK1D. Interacts with NCOA2; NCOA2 can interact with ESR1 AF-1 and AF-2 domains simultaneously and mediate their transcriptional synergy. Interacts with DDX5. Interacts with NCOA1; the interaction seems to require a self-association of N-terminal and C-terminal regions. Interacts with ZNF366, DDX17, NFKB1, RELA, SP1 and SP3. Interacts with NRIP1. Interacts with GPER1; the interaction occurs in an estrogen-dependent manner. Interacts with CLOCK and the interaction is stimulated by estrogen. Interacts with TRIP4 (ufmylated); estrogen dependent. Interacts with LMTK3; the interaction phosphorylates ESR1 (in vitro) and protects it against proteasomal degradation. Interacts with CCAR2 (via N-terminus) in a ligand-independent manner. Interacts with ZFHX3. Interacts with SFR1 in a ligand-dependent and -independent manner. Interacts with DCAF13, LATS1 and DCAF1; regulates ESR1 ubiquitination and ubiquitin-mediated proteasomal degradation. Interacts (via DNA-binding domain) with POU4F2 (C-terminus); this interaction increases the estrogen receptor ESR1 transcriptional activity in a DNA- and ligand 17-beta-estradiol-independent manner. Interacts with ESRRB isoform 1. Interacts with UBE3A and WBP2. Interacts with GTF2B. Interacts with RBM39. In the absence of hormonal ligand, interacts with TACC1. Interacts with PI3KR1 or PI3KR2 and PTK2/FAK1. Interacts with SRC. Interacts with BAG1; the interaction is promoted in the absence of estradiol (17-beta-estradiol/E2). Interacts with and ubiquitinated by STUB1; the interaction is promoted in the absence of estradiol (17-beta-estradiol/E2). Interacts with NEDD8. In terms of processing, ubiquitinated; regulated by LATS1 via DCAF1 it leads to ESR1 proteasomal degradation. Deubiquitinated by OTUB1. Ubiquitinated by STUB1/CHIP; in the CA1 hippocampal region following loss of endogenous circulating estradiol (17-beta-estradiol/E2). Ubiquitinated by UBR5, leading to its degradation: UBR5 specifically recognizes and binds ligand-bound ESR1 when it is not associated with coactivators (NCOAs). In presence of NCOAs, the UBR5-degron is not accessible, preventing its ubiquitination and degradation. Post-translationally, phosphorylated by cyclin A/CDK2 and CK1. Phosphorylation probably enhances transcriptional activity. Dephosphorylation at Ser-118 by PPP5C inhibits its transactivation activity. Phosphorylated by LMTK3 (in vitro). Palmitoylated at Cys-447 by ZDHHC7 and ZDHHC21. Palmitoylation is required for plasma membrane targeting and for rapid intracellular signaling via ERK and AKT kinases and cAMP generation, but not for signaling mediated by the nuclear hormone receptor. In terms of processing, dimethylated by PRMT1 at Arg-260. The methylation may favor cytoplasmic localization. Demethylated by JMJD6 at Arg-260.

The protein localises to the nucleus. It is found in the cytoplasm. The protein resides in the golgi apparatus. It localises to the cell membrane. Functionally, nuclear hormone receptor. The steroid hormones and their receptors are involved in the regulation of eukaryotic gene expression and affect cellular proliferation and differentiation in target tissues. Ligand-dependent nuclear transactivation involves either direct homodimer binding to a palindromic estrogen response element (ERE) sequence or association with other DNA-binding transcription factors, such as AP-1/c-Jun, c-Fos, ATF-2, Sp1 and Sp3, to mediate ERE-independent signaling. Ligand binding induces a conformational change allowing subsequent or combinatorial association with multiprotein coactivator complexes through LXXLL motifs of their respective components. Mutual transrepression occurs between the estrogen receptor (ER) and NF-kappa-B in a cell-type specific manner. Decreases NF-kappa-B DNA-binding activity and inhibits NF-kappa-B-mediated transcription from the IL6 promoter and displace RELA/p65 and associated coregulators from the promoter. Recruited to the NF-kappa-B response element of the CCL2 and IL8 promoters and can displace CREBBP. Present with NF-kappa-B components RELA/p65 and NFKB1/p50 on ERE sequences. Can also act synergistically with NF-kappa-B to activate transcription involving respective recruitment adjacent response elements; the function involves CREBBP. Can activate the transcriptional activity of TFF1. Also mediates membrane-initiated estrogen signaling involving various kinase cascades. Essential for MTA1-mediated transcriptional regulation of BRCA1 and BCAS3. Maintains neuronal survival in response to ischemic reperfusion injury when in the presence of circulating estradiol (17-beta-estradiol/E2). This chain is Estrogen receptor (ESR1), found in Mesocricetus auratus (Golden hamster).